The chain runs to 259 residues: Protein GrpE (259 aa).

Disordered stretches follow at residues 1–74 (MNSD…IKGS) and 228–259 (PGPK…KDEN). Residues 17–40 (SSQNNPSENSVSSPNSNESVNQVE) show a composition bias toward low complexity. Composition is skewed to polar residues over residues 56–73 (VDTA…NIKG) and 240–253 (QSAS…SVDG).

This sequence belongs to the GrpE family. As to quaternary structure, homodimer.

Its subcellular location is the cytoplasm. Functionally, participates actively in the response to hyperosmotic and heat shock by preventing the aggregation of stress-denatured proteins, in association with DnaK and GrpE. It is the nucleotide exchange factor for DnaK and may function as a thermosensor. Unfolded proteins bind initially to DnaJ; upon interaction with the DnaJ-bound protein, DnaK hydrolyzes its bound ATP, resulting in the formation of a stable complex. GrpE releases ADP from DnaK; ATP binding to DnaK triggers the release of the substrate protein, thus completing the reaction cycle. Several rounds of ATP-dependent interactions between DnaJ, DnaK and GrpE are required for fully efficient folding. The sequence is that of Protein GrpE from Prochlorococcus marinus (strain NATL2A).